We begin with the raw amino-acid sequence, 490 residues long: AP-5 complex subunit mu-1 (490 aa).

The region spanning 206 to 476 is the MHD domain; it reads KAQISISITE…LISSDYYIWN (271 aa).

This sequence belongs to the adaptor complexes medium subunit family. Probably part of the adaptor protein complex 5 (AP-5) a tetramer composed of AP5B1, AP5M1, AP5S1 and AP5Z1. As to expression, widely expressed, including in small intestine and testis. In small intestine, highly expressed in cytoplasm of villi epithelial cells and internal glands. In testis, selectively expressed in maturing sperm cells (at protein level).

It is found in the cytoplasm. Its subcellular location is the cytosol. It localises to the late endosome membrane. The protein localises to the lysosome membrane. Its function is as follows. As part of AP-5, a probable fifth adaptor protein complex it may be involved in endosomal transport. In Mus musculus (Mouse), this protein is AP-5 complex subunit mu-1 (Ap5m1).